A 713-amino-acid polypeptide reads, in one-letter code: BBSome complex assembly protein BBS10 (713 aa).

It belongs to the TCP-1 chaperonin family. In terms of assembly, component of a complex composed at least of MKKS, BBS10, BBS12, TCP1, CCT2, CCT3, CCT4, CCT5 and CCT8.

It is found in the cell projection. The protein resides in the cilium. Probable molecular chaperone that assists the folding of proteins upon ATP hydrolysis. Plays a role in the assembly of BBSome, a complex involved in ciliogenesis regulating transports vesicles to the cilia. Involved in adipogenic differentiation. The protein is BBSome complex assembly protein BBS10 (Bbs10) of Mus musculus (Mouse).